Consider the following 381-residue polypeptide: Guanine nucleotide-binding protein G(olf) subunit alpha (381 aa).

Positions 1-25 (MGCLGNSSKTAEDQGVDEKERREAN) are disordered. Gly2 is lipidated: N-palmitoyl glycine. Cys3 is lipidated: S-palmitoyl cysteine. Residues 10–25 (TAEDQGVDEKERREAN) are compositionally biased toward basic and acidic residues. The 341-residue stretch at 41 to 381 (ATHRLLLLGA…RMHLKQYELL (341 aa)) folds into the G-alpha domain. Positions 44–57 (RLLLLGAGESGKST) are G1 motif. Residues Glu52, Ser53, Gly54, Lys55, Ser56, and Thr57 each coordinate GTP. Residue Ser56 participates in Mg(2+) binding. The residue at position 178 (Thr178) is a Phosphothreonine. The tract at residues 183–191 (DLLRCRVLT) is G2 motif. Residues Leu185, Arg186, and Thr191 each coordinate GTP. Residues Thr191 and Asp210 each coordinate Mg(2+). A G3 motif region spans residues 206-215 (FHMFDVGGQR). GTP is bound by residues Gly213, Asn279, Lys280, Asp282, and Ala353. The tract at residues 275–282 (ILFLNKQD) is G4 motif. The G5 motif stretch occupies residues 351-356 (TCAVDT).

It belongs to the G-alpha family. G(s) subfamily. In terms of assembly, g proteins are composed of 3 units; alpha, beta and gamma. The alpha chain contains the guanine nucleotide binding site. Interacts with GAS2L2. Interacts (GDP-bound form) with RIC8B (via C-terminus); promoting GNAL folding and association with the plasma membrane.

It localises to the cell membrane. The catalysed reaction is GTP + H2O = GDP + phosphate + H(+). Functionally, guanine nucleotide-binding protein (G protein) involved as transducer in olfactory signal transduction controlled by G protein-coupled receptors (GPCRs). Contains the guanine nucleotide binding site and alternates between an active, GTP-bound state and an inactive, GDP-bound state. Signaling by an activated GPCR promotes GDP release and GTP binding. The alpha subunit has a low GTPase activity that converts bound GTP to GDP, thereby terminating the signal. Both GDP release and GTP hydrolysis are modulated by numerous regulatory proteins. GNAL/G(olf) alpha specifically mediates olfactory signal transduction within the olfactory neuroepithelium and the basal ganglia following GPCRs activation. Acts by promoting the specific activation of adenylyl cyclase ADCY3, resulting in increased levels of the signaling molecule cAMP. The protein is Guanine nucleotide-binding protein G(olf) subunit alpha of Mus musculus (Mouse).